The sequence spans 344 residues: L-lactate dehydrogenase B (344 aa).

Residues 62 to 67 (DALPDK) and R109 each bind NAD(+). Residues R116, N148, and R179 each coordinate substrate. N148 lines the NAD(+) pocket. H203 acts as the Proton acceptor in catalysis. Position 258 (T258) interacts with substrate.

Belongs to the LDH/MDH superfamily. LDH family. Tetramer that arise from random association of LDH-A and LDH-B.

It carries out the reaction (S)-lactate + NAD(+) = pyruvate + NADH + H(+). It functions in the pathway fermentation; pyruvate fermentation to lactate; (S)-lactate from pyruvate: step 1/1. In Hordeum vulgare (Barley), this protein is L-lactate dehydrogenase B.